The primary structure comprises 691 residues: Germ cell nuclear acidic protein (691 aa).

Positions 22–25 match the SUMO interaction motif 1 (SIM) motif; sequence ILNV. A disordered region spans residues 25-488; the sequence is VQSSSDDTSG…GAAKVEKRKT (464 aa). Over residues 27–36 the composition is skewed to low complexity; that stretch reads SSSDDTSGSS. Residues 48-63 show a composition bias toward polar residues; the sequence is CILNVQSRSGDTSGSS. 3 consecutive short sequence motifs (SUMO interaction motif 1 (SIM)) follow at residues 76–79, 97–100, and 121–124; these read VVVI, LLEI, and IVIS. Basic and acidic residues predominate over residues 86-97; sequence ECHTHEEKKAKL. The segment covering 124-333 has biased composition (acidic residues); sequence SDDDNDDDNG…VPDDNSDDLE (210 aa). Residues 467–488 are compositionally biased toward basic residues; sequence GHKKRGPSKKKPGAAKVEKRKT. Positions 522–677 constitute a SprT-like domain; sequence VQRIYDLFNR…AKCKGSLVMV (156 aa).

It belongs to the serine-aspartate repeat-containing protein (SDr) family. As to quaternary structure, interacts (via SIM domains) with SUMO2; this interaction allows the GCNA recruitment to DPCs sites. Interacts with TOP2A; this interaction allows the resolution of topoisomerase II (TOP2A) DNA-protein cross-links. As to expression, expressed in germ cells of the testis (at protein level). Detected in skeletal muscle, liver, kidney, pancreas, heart, lung and brain. Expressed throughout spermatogenesis, from spermatogonia to elongated spermatids, in normal adult testis (at protein level).

The protein resides in the nucleus. The protein localises to the PML body. Its subcellular location is the chromosome. May play a role in DNA-protein cross-links (DPCs) clearance through a SUMO-dependent recruitment to sites of DPCs, ensuring the genomic stability by protecting germ cells and early embryos from various sources of damage. Can resolve the topoisomerase II (TOP2A) DPCs. The sequence is that of Germ cell nuclear acidic protein from Homo sapiens (Human).